Consider the following 349-residue polypeptide: Transmembrane protein 255A (349 aa).

A run of 4 helical transmembrane segments spans residues 30–50, 57–77, 89–109, and 226–246; these read IYVT…GLAA, VTVG…LGII, LVAS…CAIV, and TILN…LGGF. The tract at residues 303-329 is disordered; sequence PSSPPSGLSDEPQSASPSPSYMWSSSA. Low complexity predominate over residues 316–329; that stretch reads SASPSPSYMWSSSA.

Belongs to the TMEM255 family.

Its subcellular location is the membrane. The sequence is that of Transmembrane protein 255A (TMEM255A) from Homo sapiens (Human).